A 316-amino-acid chain; its full sequence is Ribosomal RNA small subunit methyltransferase H (316 aa).

S-adenosyl-L-methionine-binding positions include 35-37, Asp55, Phe84, Asp105, and Gln112; that span reads AGH.

This sequence belongs to the methyltransferase superfamily. RsmH family.

It is found in the cytoplasm. The enzyme catalyses cytidine(1402) in 16S rRNA + S-adenosyl-L-methionine = N(4)-methylcytidine(1402) in 16S rRNA + S-adenosyl-L-homocysteine + H(+). Functionally, specifically methylates the N4 position of cytidine in position 1402 (C1402) of 16S rRNA. The polypeptide is Ribosomal RNA small subunit methyltransferase H (Streptococcus pneumoniae serotype 4 (strain ATCC BAA-334 / TIGR4)).